A 110-amino-acid chain; its full sequence is Large ribosomal subunit protein uL22 (110 aa).

This sequence belongs to the universal ribosomal protein uL22 family. Part of the 50S ribosomal subunit.

Functionally, this protein binds specifically to 23S rRNA; its binding is stimulated by other ribosomal proteins, e.g. L4, L17, and L20. It is important during the early stages of 50S assembly. It makes multiple contacts with different domains of the 23S rRNA in the assembled 50S subunit and ribosome. The globular domain of the protein is located near the polypeptide exit tunnel on the outside of the subunit, while an extended beta-hairpin is found that lines the wall of the exit tunnel in the center of the 70S ribosome. The polypeptide is Large ribosomal subunit protein uL22 (Aggregatibacter actinomycetemcomitans (Actinobacillus actinomycetemcomitans)).